The chain runs to 587 residues: DELLA protein RGA (587 aa).

Positions 1–26 are disordered; sequence MKRDHHQFQGRLSNHGTSSSSSSISK. Positions 44-48 match the DELLA motif motif; it reads DELLA. Positions 66-70 match the LEXLE motif motif; sequence LEQLE. The VHYNP motif signature appears at 89-93; that stretch reads VHYNP. Residues 152–181 form a disordered region; that stretch reads IDSSSSSNNQNKRLKSCSSPDSMVTSTSTG. Positions 153-175 are enriched in polar residues; the sequence is DSSSSSNNQNKRLKSCSSPDSMV. One can recognise a GRAS domain in the interval 212–581; sequence VDSQENGVRL…RPLITTSAWK (370 aa). The leucine repeat I (LRI) stretch occupies residues 219-273; it reads VRLVHALMACAEAIQQNNLTLAEALVKQIGCLAVSQAGAMRKVATYFAEALARRI. Residues 292–357 form a VHIID region; sequence QMHFYETCPY…GGPPTFRLTG (66 aa). A VHIID motif is present at residues 323–327; the sequence is VHVID. The interval 371–403 is leucine repeat II (LRII); the sequence is EVGCKLAQLAEAIHVEFEYRGFVANSLADLDAS. The tract at residues 415 to 502 is PFYRE; that stretch reads VAVNSVFELH…EVYLGKQICN (88 aa). The short motif at 423 to 427 is the LXXLL motif element; it reads LHKLL. The interval 505–581 is SAW; sequence ACEGPDRVER…RPLITTSAWK (77 aa).

It belongs to the GRAS family. DELLA subfamily. Interacts directly with the GID2/SLY1 component of the SCF(GID2) complex. Interacts (via N-terminus) with GID1A, GID1B and GID1B (via N-terminus). Binds to bHLH transcription factors such as MYC2, PIF1, PIF4, PIF6 and SPT. Interacts with the BOI proteins BOI, BRG1, BRG2 and BRG3. Interacts with NFYC9. Interacts with TOPP4. Interacts with FLZ5. Binds to zinc finger proteins MGP/IDD3, IDD4, IDD5, BIB/IDD9 and JKD/IDD10 in the nucleus. Binds to and coactivates GAF1/IDD2 and ENY/IDD1. Binds to PDF2 and ATML1. Post-translationally, phosphorylated. Phosphorylation may increase the interaction with GID2. Gibberellin (GA) induces dephosphorylation of RGA by TOPP4 and subsequent degradation by the proteasomal pathway. In terms of processing, ubiquitinated. Upon GA application it is ubiquitinated by the SCF(GID2) complex, leading to its subsequent degradation. Post-translationally, O-fucosylated by SPY. O-fucosylation enhances RGA activity by promoting RGA binding to key transcription factors in brassinosteroid and light signaling pathways. In terms of tissue distribution, ubiquitously expressed. Expressed in roots, rosette leaves, bolting and mature stems, young and mature siliques, flower buds and influorescences.

The protein localises to the nucleus. Probable transcriptional regulator that acts as a repressor of the gibberellin (GA) signaling pathway. Probably acts by participating in large multiprotein complexes that repress transcription of GA-inducible genes. Positively regulates XERICO expression in seeds. Upon GA application, it is degraded by the proteasome, allowing the GA signaling pathway. Compared to other DELLA proteins, it is the most sensitive to GA application. No effect of the BOI proteins on its stability. Its activity is probably regulated by other phytohormones such as auxin and ethylene, attenuation of auxin transport delaying its GA-induced degradation. Involved in the regulation of seed dormancy and germination, including glucose-induced delay of seed germination. This chain is DELLA protein RGA, found in Arabidopsis thaliana (Mouse-ear cress).